The primary structure comprises 94 residues: Co-chaperonin GroES (94 aa).

The protein belongs to the GroES chaperonin family. In terms of assembly, heptamer of 7 subunits arranged in a ring. Interacts with the chaperonin GroEL.

It localises to the cytoplasm. Its function is as follows. Together with the chaperonin GroEL, plays an essential role in assisting protein folding. The GroEL-GroES system forms a nano-cage that allows encapsulation of the non-native substrate proteins and provides a physical environment optimized to promote and accelerate protein folding. GroES binds to the apical surface of the GroEL ring, thereby capping the opening of the GroEL channel. The chain is Co-chaperonin GroES from Bacillus cytotoxicus (strain DSM 22905 / CIP 110041 / 391-98 / NVH 391-98).